A 247-amino-acid polypeptide reads, in one-letter code: ATP synthase subunit a, plastid (247 aa).

A run of 5 helical transmembrane segments spans residues 33–53 (FLVH…LLGS), 95–115 (VPFI…GALL), 134–154 (INTT…AGIL), 199–219 (LVVV…VMLL), and 220–240 (GLFT…AYIG).

Belongs to the ATPase A chain family. F-type ATPases have 2 components, CF(1) - the catalytic core - and CF(0) - the membrane proton channel. CF(1) has five subunits: alpha(3), beta(3), gamma(1), delta(1), epsilon(1). CF(0) has four main subunits: a, b, b' and c.

It is found in the plastid membrane. Key component of the proton channel; it plays a direct role in the translocation of protons across the membrane. In Cuscuta exaltata (Tall dodder), this protein is ATP synthase subunit a, plastid.